A 418-amino-acid chain; its full sequence is MAP kinase-interacting serine/threonine-protein kinase 1 (418 aa).

Residues 1 to 23 (MVSSQPVPFDDGGKRRKKKRKTR) form a disordered region. Residues 37–321 (RLTDELLGEG…AFQVLQHPWL (285 aa)) enclose the Protein kinase domain. ATP is bound by residues 43–51 (LGEGAYAKV) and Lys66. Residue Asp158 is the Proton acceptor of the active site. Residues 384–418 (PPSKSRLAKRRAQAHARKGGSHPTHSTVTASQGTP) form a disordered region. Over residues 389-403 (RLAKRRAQAHARKGG) the composition is skewed to basic residues. The segment covering 406–418 (PTHSTVTASQGTP) has biased composition (polar residues).

The protein belongs to the protein kinase superfamily. CAMK Ser/Thr protein kinase family. It depends on Mg(2+) as a cofactor.

It carries out the reaction L-seryl-[protein] + ATP = O-phospho-L-seryl-[protein] + ADP + H(+). The enzyme catalyses L-threonyl-[protein] + ATP = O-phospho-L-threonyl-[protein] + ADP + H(+). Its function is as follows. May play a role in the response to environmental stress and cytokines. Appears to regulate translation by phosphorylating EIF4E, thus increasing the affinity of this protein for the 7-methylguanosine-containing mRNA cap. This is MAP kinase-interacting serine/threonine-protein kinase 1 (mknk1) from Xenopus laevis (African clawed frog).